A 66-amino-acid polypeptide reads, in one-letter code: Large ribosomal subunit protein bL35 (66 aa).

The span at 1 to 15 (MPKMKTKSSAKKRFK) shows a compositional bias: basic residues. A disordered region spans residues 1–32 (MPKMKTKSSAKKRFKMTATGKVRAGQAGKRHG).

This sequence belongs to the bacterial ribosomal protein bL35 family.

This chain is Large ribosomal subunit protein bL35, found in Dinoroseobacter shibae (strain DSM 16493 / NCIMB 14021 / DFL 12).